Here is a 335-residue protein sequence, read N- to C-terminus: Transcription factor IIIA (335 aa).

C2H2-type zinc fingers lie at residues 13-37 (YICS…LCKH), 43-67 (FPCT…SMTH), 73-98 (CKCD…QRAH), 105-129 (YECY…QYIH), 135-159 (FKCN…EKVH), 162-188 (YPCQ…AASH), 192-214 (TICD…KRTH), 221-246 (YKCP…LSFH), and 252-276 (FACG…ANTH). Basic and acidic residues predominate over residues 269-280 (LDRHANTHDPEK). The segment at 269–335 (LDRHANTHDP…ATAMQNLSIK (67 aa)) is disordered. Residues 281-292 (KKMKKPRPKKSL) show a composition bias toward basic residues.

It is found in the nucleus. Involved in ribosomal large subunit biogenesis. Interacts with the internal control region (ICR) of approximately 50 bases within the 5S RNA genes, is required for correct transcription of these genes by RNA polymerase III. Also binds the transcribed 5S RNA's. This is Transcription factor IIIA (gtf3a) from Lithobates pipiens (Northern leopard frog).